We begin with the raw amino-acid sequence, 712 residues long: Methylmalonyl-CoA mutase (712 aa).

Substrate contacts are provided by residues 73-77 (TVRQY), 183-185 (TIQ), R195, K222, H232, and 271-273 (RLS). The region spanning 580–712 (KPKIMVAKLG…DLIEGKRRNV (133 aa)) is the B12-binding domain. Adenosylcob(III)alamin is bound at residue H593.

Belongs to the methylmalonyl-CoA mutase family. As to quaternary structure, homodimer. The cofactor is adenosylcob(III)alamin. It depends on a monovalent cation as a cofactor.

It catalyses the reaction (R)-methylmalonyl-CoA = succinyl-CoA. Its pathway is metabolic intermediate metabolism; propanoyl-CoA degradation; succinyl-CoA from propanoyl-CoA: step 3/3. In terms of biological role, radical enzyme that catalyzes the transformation of methylmalonyl-CoA to succinyl-CoA. Is required for growth on the polyhydroxyalkanoate degradation pathway intermediates 3-hydroxybutyrate and acetoacetate as sole carbon source. In Rhizobium meliloti (strain 1021) (Ensifer meliloti), this protein is Methylmalonyl-CoA mutase.